The primary structure comprises 308 residues: Palmitoyltransferase ZDHHC7 (308 aa).

Topologically, residues 1-50 (MQPSGHRLRDIEHHPLLTDNDNYDSASSSSSEADMADRVWFIRDGCGMVC) are cytoplasmic. A helical transmembrane segment spans residues 51–71 (AVMTWLLVVYADFVVTFVMLL). The Lumenal segment spans residues 72–75 (PSKD). Residues 76–96 (FWYSVVNGVLFNCLAVLALSS) traverse the membrane as a helical segment. At 97–173 (HLRTMLTDPG…NNCVGEKNQR (77 aa)) the chain is on the cytoplasmic side. In terms of domain architecture, DHHC spans 130-180 (YKCPKCCCIKPERAHHCSICKRCIRKMDHHCPWVNNCVGEKNQRFFVLFTM). Cys-160 functions as the S-palmitoyl cysteine intermediate in the catalytic mechanism. A helical transmembrane segment spans residues 174 to 194 (FFVLFTMYIALSSIHALILCG). The Lumenal portion of the chain corresponds to 195-217 (LQFISCVRGQWTECSDFSPPITV). The helical transmembrane segment at 218 to 238 (ILLVFLCLEGLLFFTFTAVMF) threads the bilayer. The Cytoplasmic segment spans residues 239–308 (GTQIHSICND…TRKGGPEFSV (70 aa)).

It belongs to the DHHC palmitoyltransferase family. Homooligomers. Heterooligomers with ZDHHC3. Post-translationally, autopalmitoylated. Widely expressed. Present in Sertoli cells (at protein level).

The protein resides in the golgi apparatus membrane. It carries out the reaction L-cysteinyl-[protein] + hexadecanoyl-CoA = S-hexadecanoyl-L-cysteinyl-[protein] + CoA. The catalysed reaction is L-cysteinyl-[protein] + tetradecanoyl-CoA = S-tetradecanoyl-L-cysteinyl-[protein] + CoA. The enzyme catalyses L-cysteinyl-[protein] + octadecanoyl-CoA = S-octadecanoyl-L-cysteinyl-[protein] + CoA. Golgi-localized palmitoyltransferase that catalyzes the addition of palmitate onto various protein substrates and therefore functions in several unrelated biological processes. Has no stringent fatty acid selectivity and in addition to palmitate can also transfer onto target proteins myristate from tetradecanoyl-CoA and stearate from octadecanoyl-CoA. Palmitoylates sex steroid hormone receptors, including ESR1, PGR and AR, thereby regulating their targeting to the plasma membrane and their function in rapid intracellular signaling upon binding of sex hormones. Palmitoylates GNAQ, a heterotrimeric G protein, regulating its dynamic localization at the plasma membrane and is thereby involved in GNAQ-dependent G protein-coupled receptor signaling pathways. Also functions in ligand-induced cell death by regulating the FAS signaling pathway through the palmitoylation and stabilization of the receptor at the plasma membrane. In epithelial cells, palmitoylates SCRIB and regulates its localization to the plasma membrane, regulating indirectly cell polarity and differentiation. Also palmitoylates JAM3 and promotes its expression at tight junctions and regulates its function in cell migration. Palmitoylates the glucose transporter GLUT4/SLC2A4 and controls the insulin-dependent translocation of GLUT4 to the plasma membrane. In brain, could also palmitoylate SNAP25 and DLG4/PSD95. Could also palmitoylate DNAJC5 and regulate its localization to the Golgi membrane. Could also palmitoylate NCDN. May play a role in follicle stimulation hormone (FSH) activation of testicular Sertoli cells. Activates pyroptosis by catalyzing palmitoylation of gasdermin-D (GSDMD). The protein is Palmitoyltransferase ZDHHC7 of Rattus norvegicus (Rat).